A 152-amino-acid chain; its full sequence is Xanthine-guanine phosphoribosyltransferase (152 aa).

5-phospho-alpha-D-ribose 1-diphosphate-binding positions include 37–38 (RG), arginine 69, and 88–96 (DDLVDTGGT). Arginine 69 contributes to the GMP binding site. Aspartate 89 lines the Mg(2+) pocket. The guanine site is built by aspartate 92 and isoleucine 135. The xanthine site is built by aspartate 92 and isoleucine 135. Residues 92 to 96 (DTGGT) and 134 to 135 (WI) contribute to the GMP site.

Belongs to the purine/pyrimidine phosphoribosyltransferase family. XGPT subfamily. Homotetramer. It depends on Mg(2+) as a cofactor.

Its subcellular location is the cell inner membrane. The catalysed reaction is GMP + diphosphate = guanine + 5-phospho-alpha-D-ribose 1-diphosphate. It catalyses the reaction XMP + diphosphate = xanthine + 5-phospho-alpha-D-ribose 1-diphosphate. The enzyme catalyses IMP + diphosphate = hypoxanthine + 5-phospho-alpha-D-ribose 1-diphosphate. It participates in purine metabolism; GMP biosynthesis via salvage pathway; GMP from guanine: step 1/1. The protein operates within purine metabolism; XMP biosynthesis via salvage pathway; XMP from xanthine: step 1/1. Its function is as follows. Purine salvage pathway enzyme that catalyzes the transfer of the ribosyl-5-phosphate group from 5-phospho-alpha-D-ribose 1-diphosphate (PRPP) to the N9 position of the 6-oxopurines guanine and xanthine to form the corresponding ribonucleotides GMP (guanosine 5'-monophosphate) and XMP (xanthosine 5'-monophosphate), with the release of PPi. To a lesser extent, also acts on hypoxanthine. The chain is Xanthine-guanine phosphoribosyltransferase from Salmonella choleraesuis (strain SC-B67).